A 476-amino-acid chain; its full sequence is Glycogen synthase (476 aa).

Lys15 is an ADP-alpha-D-glucose binding site.

Belongs to the glycosyltransferase 1 family. Bacterial/plant glycogen synthase subfamily.

The catalysed reaction is [(1-&gt;4)-alpha-D-glucosyl](n) + ADP-alpha-D-glucose = [(1-&gt;4)-alpha-D-glucosyl](n+1) + ADP + H(+). Its pathway is glycan biosynthesis; glycogen biosynthesis. Functionally, synthesizes alpha-1,4-glucan chains using ADP-glucose. The sequence is that of Glycogen synthase from Streptococcus agalactiae serotype III (strain NEM316).